The sequence spans 311 residues: VQ motif-containing protein 9 (311 aa).

The span at 1-27 (MDKSCNSSGDSSAVSASATSSTGNNTT) shows a compositional bias: low complexity. A disordered region spans residues 1–78 (MDKSCNSSGD…QINQGNLHQH (78 aa)). A VQ motif is present at residues 90 to 99 (FRDVVQKLTG). Disordered regions lie at residues 103 to 125 (HERISAPPQQPIHHPKPQQSSRL), 228 to 266 (QQENAPPSQHNSFPPPHPPPPSSAVSQTVPTSIPAPPLF), and 290 to 311 (GQLGFPVSPTTVPLPSPKYKGH). The segment covering 240 to 249 (FPPPHPPPPS) has biased composition (pro residues). A compositionally biased stretch (low complexity) spans 290 to 302 (GQLGFPVSPTTVP).

In terms of assembly, interacts (via N-terminus) with WRKY8. Highly expressed in roots and at lower levels in rosette leaves, cauline leaves, stems, flowers and siliques.

The protein localises to the nucleus. Functions as a negative regulator of salt stress response. Functions as a repressor of WRKY8 transcription factor by decreasing the DNA-binding activity of WRKY8 and acts antagonistically with WRKY8 to regulate sodium and potassium homeostasis under salt stress. This is VQ motif-containing protein 9 from Arabidopsis thaliana (Mouse-ear cress).